Consider the following 668-residue polypeptide: Myb-like protein W (668 aa).

6 disordered regions span residues 57-124 (LDQF…NESV), 246-357 (EKEK…EEEV), 403-432 (KPKS…TDKG), 497-546 (YTNT…NKER), 561-583 (SMGR…TTTS), and 631-668 (QCEE…DEII). The segment covering 69-121 (NNNNNNNSNNNNNNNNNNNNNNNNNNNNNNNNNNNNNNNNNNYNNYNNNNNNN) has biased composition (low complexity). Basic and acidic residues predominate over residues 246–268 (EKEKRKKEREEREEREKQEKQEQ). Positions 293 to 307 (NNKDNNHNGYYYYYD) are enriched in low complexity. Residues 308–318 (NDNDNYNDGDD) are compositionally biased toward acidic residues. Over residues 319 to 335 (EKEKEKEKEKEKEKENE) the composition is skewed to basic and acidic residues. A Myb-like domain is found at 344-398 (TSMVNSEEWTEEEVNKMNEIRGKLSTADYNYWDKVSAHVKSKTAEQCQRKYNSRF). The segment covering 501 to 542 (NNNNNNNNNNNNNNNNNNNNNNNNNNNNNNNNNNNNNNNNNN) has biased composition (low complexity). The span at 632-641 (CEERKKKEDR) shows a compositional bias: basic and acidic residues. Residues 642-651 (DVDEDGEDDY) show a composition bias toward acidic residues.

The chain is Myb-like protein W (mybW) from Dictyostelium discoideum (Social amoeba).